Reading from the N-terminus, the 527-residue chain is Tyrosine-protein kinase TXK (527 aa).

The tract at residues 35-79 (DEELPEKYTQRRRPWLSQLSNKKQSNTGRVQPSKRKPLPPLPPSE) is disordered. The segment covering 51–64 (SQLSNKKQSNTGRV) has biased composition (polar residues). A Nuclear localization signal motif is present at residues 68-73 (KRKPLP). An SH3 domain is found at 82–142 (EEKIQVKALY…PSNYVTENKI (61 aa)). Residue Tyr91 is modified to Phosphotyrosine; by autocatalysis. The SH2 domain maps to 150-246 (WYHRNITRNQ…GLMTRLRYPV (97 aa)). The Protein kinase domain occupies 271–527 (LAFIKEIGSG…RAVTEIAETW (257 aa)). Residues 277–285 (IGSGQFGVV) and Lys299 each bind ATP. Catalysis depends on Asp390, which acts as the Proton acceptor. Position 420 is a phosphotyrosine; by FYN and autocatalysis (Tyr420).

Belongs to the protein kinase superfamily. Tyr protein kinase family. TEC subfamily. Interacts with PARP1 and EEF1A1. Interacts with SH2D2A. Interacts with FYN. Phosphorylated at Tyr-420 by FYN. Autophosphorylation at Tyr-91 is critical for the activation of TXK, leading to the up-regulation of IFN-gamma gene transcription. In terms of processing, the cysteine string at the N-terminus is palmitoylated and required for the proper subcellular location. As to expression, expressed in T-cells and some myeloid cell lines. Expressed in Th1/Th0 cells with IFN-gamma-producing potential.

The protein localises to the cytoplasm. It is found in the nucleus. Its subcellular location is the cell membrane. The catalysed reaction is L-tyrosyl-[protein] + ATP = O-phospho-L-tyrosyl-[protein] + ADP + H(+). Its activity is regulated as follows. Activated by phosphorylation by FYN. Its function is as follows. Non-receptor tyrosine kinase that plays a redundant role with ITK in regulation of the adaptive immune response. Regulates the development, function and differentiation of conventional T-cells and nonconventional NKT-cells. When antigen presenting cells (APC) activate T-cell receptor (TCR), a series of phosphorylation leads to the recruitment of TXK to the cell membrane, where it is phosphorylated at Tyr-420. Phosphorylation leads to TXK full activation. Also contributes to signaling from many receptors and participates in multiple downstream pathways, including regulation of the actin cytoskeleton. Like ITK, can phosphorylate PLCG1, leading to its localization in lipid rafts and activation, followed by subsequent cleavage of its substrates. In turn, the endoplasmic reticulum releases calcium in the cytoplasm and the nuclear activator of activated T-cells (NFAT) translocates into the nucleus to perform its transcriptional duty. Plays a role in the positive regulation of IFNG transcription in T-helper 1 cells as part of an IFNG promoter-binding complex with PARP1 and EEF1A1. Within the complex, phosphorylates both PARP1 and EEF1A1. Also phosphorylates key sites in LCP2 leading to the up-regulation of Th1 preferred cytokine IL-2. Phosphorylates 'Tyr-201' of CTLA4 which leads to the association of PI-3 kinase with the CTLA4 receptor. In Homo sapiens (Human), this protein is Tyrosine-protein kinase TXK (TXK).